Here is a 127-residue protein sequence, read N- to C-terminus: Protein ApaG (127 aa).

In terms of domain architecture, ApaG spans 3-127 (DDPRYRVEVE…FVLSVPRTLH (125 aa)).

The sequence is that of Protein ApaG from Xanthomonas axonopodis pv. citri (strain 306).